The chain runs to 263 residues: 5'-nucleotidase SurE (263 aa).

A divalent metal cation-binding residues include Asp-10, Asp-11, Ser-41, and Asn-95.

This sequence belongs to the SurE nucleotidase family. It depends on a divalent metal cation as a cofactor.

It is found in the cytoplasm. It catalyses the reaction a ribonucleoside 5'-phosphate + H2O = a ribonucleoside + phosphate. Its function is as follows. Nucleotidase that shows phosphatase activity on nucleoside 5'-monophosphates. The chain is 5'-nucleotidase SurE from Methanoculleus marisnigri (strain ATCC 35101 / DSM 1498 / JR1).